The primary structure comprises 459 residues: MQKIETFWYFCLKHFKQELNGQQFNTWIKPLKLEICPDVENTLVLIAPNRFVLQWIKDNFVNRIDEMAQGHFNEKIHFKLELKDPAEIKTATIKAPEPKSKEDKKPPTDKAHGTTARKTNPSRLNPAFTFDAFVTGKANQLARAGAIQVAERPGIAYNPLFIYGGVGLGKTHLMHAVGNYVMELDAGAKIRYVHAEKYVSDVVSAYQHKSFDKFKLYYHSLDLLLVDDVQFFSGKNRTQEEFFYAFNALIEAHKQVIITSDCYPKEISGLEERLVSRFGWGLTVAIEPPELEMRVAILLKKAFIEKIELDESTAFFIAKYIRSNVRELEGALKRVLAYSRFTGHPISLDLAKEALKDLLAIQNRQISIENIQKTVADYYKIKVADMYSKKRVRAIARPRQVAMAIAKELTQLSLPDIGEAFGGRDHTTVLHAHRKIVELRASDPGINRDYSTLIHILRG.

Residues 1–74 (MQKIETFWYF…DEMAQGHFNE (74 aa)) are domain I, interacts with DnaA modulators. The tract at residues 74 to 122 (EKIHFKLELKDPAEIKTATIKAPEPKSKEDKKPPTDKAHGTTARKTNPS) is domain II. The tract at residues 91 to 123 (ATIKAPEPKSKEDKKPPTDKAHGTTARKTNPSR) is disordered. The segment covering 96 to 112 (PEPKSKEDKKPPTDKAH) has biased composition (basic and acidic residues). The segment at 123-339 (RLNPAFTFDA…GALKRVLAYS (217 aa)) is domain III, AAA+ region. ATP is bound by residues G167, G169, K170, and T171. The tract at residues 340–459 (RFTGHPISLD…YSTLIHILRG (120 aa)) is domain IV, binds dsDNA.

It belongs to the DnaA family. As to quaternary structure, oligomerizes as a right-handed, spiral filament on DNA at oriC.

The protein resides in the cytoplasm. Functionally, plays an essential role in the initiation and regulation of chromosomal replication. ATP-DnaA binds to the origin of replication (oriC) to initiate formation of the DNA replication initiation complex once per cell cycle. Binds the DnaA box (a 9 base pair repeat at the origin) and separates the double-stranded (ds)DNA. Forms a right-handed helical filament on oriC DNA; dsDNA binds to the exterior of the filament while single-stranded (ss)DNA is stabiized in the filament's interior. The ATP-DnaA-oriC complex binds and stabilizes one strand of the AT-rich DNA unwinding element (DUE), permitting loading of DNA polymerase. After initiation quickly degrades to an ADP-DnaA complex that is not apt for DNA replication. Binds acidic phospholipids. The chain is Chromosomal replication initiator protein DnaA from Nitrosomonas eutropha (strain DSM 101675 / C91 / Nm57).